A 398-amino-acid chain; its full sequence is Succinate--CoA ligase [ADP-forming] subunit beta (398 aa).

Residues 9–254 form the ATP-grasp domain; sequence KRLLHEYGAP…TSEEDPKEIE (246 aa). ATP contacts are provided by residues lysine 46, 53–55, glutamate 109, alanine 112, and glutamate 117; that span reads GRG. Mg(2+) is bound by residues asparagine 209 and aspartate 223. Substrate contacts are provided by residues asparagine 274 and 331–333; that span reads GIM.

It belongs to the succinate/malate CoA ligase beta subunit family. Heterotetramer of two alpha and two beta subunits. Mg(2+) is required as a cofactor.

The catalysed reaction is succinate + ATP + CoA = succinyl-CoA + ADP + phosphate. It carries out the reaction GTP + succinate + CoA = succinyl-CoA + GDP + phosphate. Its pathway is carbohydrate metabolism; tricarboxylic acid cycle; succinate from succinyl-CoA (ligase route): step 1/1. In terms of biological role, succinyl-CoA synthetase functions in the citric acid cycle (TCA), coupling the hydrolysis of succinyl-CoA to the synthesis of either ATP or GTP and thus represents the only step of substrate-level phosphorylation in the TCA. The beta subunit provides nucleotide specificity of the enzyme and binds the substrate succinate, while the binding sites for coenzyme A and phosphate are found in the alpha subunit. The polypeptide is Succinate--CoA ligase [ADP-forming] subunit beta (Bartonella henselae (strain ATCC 49882 / DSM 28221 / CCUG 30454 / Houston 1) (Rochalimaea henselae)).